Consider the following 181-residue polypeptide: Heavy metal-associated isoprenylated plant protein 46 (181 aa).

One can recognise an HMA domain in the interval 2–71 (KQKILIRVTM…KVAFAELVSV (70 aa)). Positions 74-121 (VEPPKKEDEKKGGDGKGAEGKGGDQKGGDKKGPDDKEPPEPKPVPCYP) are disordered. Residues 75 to 113 (EPPKKEDEKKGGDGKGAEGKGGDQKGGDKKGPDDKEPPE) are compositionally biased toward basic and acidic residues. The residue at position 178 (Cys-178) is a Cysteine methyl ester. The S-farnesyl cysteine moiety is linked to residue Cys-178. The propeptide at 179 to 181 (KIM) is removed in mature form.

It belongs to the HIPP family.

In terms of biological role, probable heavy-metal-binding protein. This Arabidopsis thaliana (Mouse-ear cress) protein is Heavy metal-associated isoprenylated plant protein 46.